Here is a 213-residue protein sequence, read N- to C-terminus: uncharacterized protein (213 aa).

S-adenosyl-L-methionine-binding residues include G53, E74, and D97.

The protein belongs to the methyltransferase superfamily. YrrT family.

In terms of biological role, could be a S-adenosyl-L-methionine-dependent methyltransferase. This is an uncharacterized protein from Bacillus velezensis (strain DSM 23117 / BGSC 10A6 / LMG 26770 / FZB42) (Bacillus amyloliquefaciens subsp. plantarum).